The following is a 218-amino-acid chain: Methylthioribulose-1-phosphate dehydratase (218 aa).

Residues H107 and H109 each coordinate Zn(2+).

Belongs to the aldolase class II family. MtnB subfamily. Requires Zn(2+) as cofactor.

The enzyme catalyses 5-(methylsulfanyl)-D-ribulose 1-phosphate = 5-methylsulfanyl-2,3-dioxopentyl phosphate + H2O. Its pathway is amino-acid biosynthesis; L-methionine biosynthesis via salvage pathway; L-methionine from S-methyl-5-thio-alpha-D-ribose 1-phosphate: step 2/6. In terms of biological role, catalyzes the dehydration of methylthioribulose-1-phosphate (MTRu-1-P) into 2,3-diketo-5-methylthiopentyl-1-phosphate (DK-MTP-1-P). The protein is Methylthioribulose-1-phosphate dehydratase of Xylella fastidiosa (strain Temecula1 / ATCC 700964).